A 326-amino-acid chain; its full sequence is Probable pectate lyase B (326 aa).

Residues 1 to 15 (MRVTAILTLATIAIA) form the signal peptide. Ca(2+) contacts are provided by aspartate 133, aspartate 162, and aspartate 166. Arginine 219 is a catalytic residue.

Belongs to the polysaccharide lyase 1 family. It depends on Ca(2+) as a cofactor.

The protein localises to the secreted. It catalyses the reaction Eliminative cleavage of (1-&gt;4)-alpha-D-galacturonan to give oligosaccharides with 4-deoxy-alpha-D-galact-4-enuronosyl groups at their non-reducing ends.. Functionally, pectinolytic enzyme consist of four classes of enzymes: pectin lyase, polygalacturonase, pectin methylesterase and rhamnogalacturonase. Among pectinolytic enzymes, pectin lyase is the most important in depolymerization of pectin, since it cleaves internal glycosidic bonds of highly methylated pectins. Favors pectate, the anion, over pectin, the methyl ester. In Aspergillus flavus (strain ATCC 200026 / FGSC A1120 / IAM 13836 / NRRL 3357 / JCM 12722 / SRRC 167), this protein is Probable pectate lyase B (plyB).